Here is a 362-residue protein sequence, read N- to C-terminus: S-adenosylmethionine-dependent nucleotide dehydratase RSAD2 (362 aa).

Residues 49-71 (QQLQGKTEAGEPPRAQEDSHLPT) form a disordered region. The segment covering 56 to 68 (EAGEPPRAQEDSH) has biased composition (basic and acidic residues). The region spanning 70 to 290 (PTTPTSVNYH…LDRHKDVSCL (221 aa)) is the Radical SAM core domain. Positions 84, 88, and 91 each coordinate [4Fe-4S] cluster. Lys198 carries the N6-acetyllysine modification. A Glycyl lysine isopeptide (Lys-Gly) (interchain with G-Cter in ubiquitin) cross-link involves residue Lys207.

Belongs to the radical SAM superfamily. RSAD2 family. Homodimer. Interacts with IRAK1 and TRAF6. Interacts with FPPS. Interacts with HADHB. Interacts (via C-terminus) with VAPA/VAP33 (via C-terminus). The cofactor is [4Fe-4S] cluster. In terms of processing, acetylated by HAT1. HAT1-mediated acetylation of Lys-198 in turn recruits UBE4A that stimulates RSAD2 polyubiquitination leading to proteasomal degradation. 'Lys-6'-linked polyubiquitination at Lys-207 leads to RSAD2 protein degradation.

It is found in the endoplasmic reticulum membrane. Its subcellular location is the golgi apparatus. The protein resides in the endoplasmic reticulum. It localises to the lipid droplet. The protein localises to the mitochondrion. It is found in the mitochondrion inner membrane. Its subcellular location is the mitochondrion outer membrane. It carries out the reaction CTP + AH2 + S-adenosyl-L-methionine = 3'-deoxy-3',4'-didehydro-CTP + 5'-deoxyadenosine + L-methionine + A + H2O + H(+). With respect to regulation, IRAK1 and TRAF6 synergistically activate RSAD2 increasing its activity with CTP as substrate about 10-fold. Interferon-inducible antiviral protein which plays a major role in the cell antiviral state induced by type I and type II interferon. Catalyzes the conversion of cytidine triphosphate (CTP) to 3'-deoxy-3',4'-didehydro-CTP (ddhCTP) via a SAM-dependent radical mechanism. In turn, ddhCTP acts as a chain terminator for the RNA-dependent RNA polymerases from multiple viruses and directly inhibits viral replication. Therefore, inhibits a wide range of DNA and RNA viruses. Also promotes TLR7 and TLR9-dependent production of IFN-beta production in plasmacytoid dendritic cells (pDCs) by facilitating 'Lys-63'-linked ubiquitination of IRAK1 by TRAF6. Plays a role in CD4+ T-cells activation and differentiation. Facilitates T-cell receptor (TCR)-mediated GATA3 activation and optimal T-helper 2 (Th2) cytokine production by modulating NFKB1 and JUNB activities. Can inhibit secretion of soluble proteins. The polypeptide is S-adenosylmethionine-dependent nucleotide dehydratase RSAD2 (Sus scrofa (Pig)).